Reading from the N-terminus, the 176-residue chain is dCTP deaminase (176 aa).

Residues 99–104 and Asp-115 contribute to the dCTP site; that span reads RSTLAR. Catalysis depends on Glu-125, which acts as the Proton donor/acceptor. DCTP is bound at residue Gln-163.

Belongs to the dCTP deaminase family. As to quaternary structure, homotrimer.

The enzyme catalyses dCTP + H2O + H(+) = dUTP + NH4(+). Its pathway is pyrimidine metabolism; dUMP biosynthesis; dUMP from dCTP (dUTP route): step 1/2. Catalyzes the deamination of dCTP to dUTP. This chain is dCTP deaminase, found in Pyrobaculum calidifontis (strain DSM 21063 / JCM 11548 / VA1).